The sequence spans 125 residues: Probable 4-amino-4-deoxy-L-arabinose-phosphoundecaprenol flippase subunit ArnF (125 aa).

The Cytoplasmic segment spans residues methionine 1 to glycine 2. A helical membrane pass occupies residues valine 3–alanine 23. Residues methionine 24 to proline 33 lie on the Periplasmic side of the membrane. Residues leucine 34–leucine 54 traverse the membrane as a helical segment. Over alanine 55–alanine 76 the chain is Cytoplasmic. Residues tyrosine 77–leucine 97 traverse the membrane as a helical segment. Over glutamine 98–alanine 100 the chain is Periplasmic. The chain crosses the membrane as a helical span at residues phenylalanine 101 to leucine 121. Topologically, residues proline 122 to serine 125 are cytoplasmic.

Belongs to the ArnF family. As to quaternary structure, heterodimer of ArnE and ArnF.

The protein localises to the cell inner membrane. The protein operates within bacterial outer membrane biogenesis; lipopolysaccharide biosynthesis. Functionally, translocates 4-amino-4-deoxy-L-arabinose-phosphoundecaprenol (alpha-L-Ara4N-phosphoundecaprenol) from the cytoplasmic to the periplasmic side of the inner membrane. This chain is Probable 4-amino-4-deoxy-L-arabinose-phosphoundecaprenol flippase subunit ArnF, found in Salmonella paratyphi A (strain ATCC 9150 / SARB42).